The sequence spans 1032 residues: Probable LRR receptor-like serine/threonine-protein kinase At1g56130 (1032 aa).

The N-terminal stretch at 1–29 (MTRIRRSPCLLLLIIWFMCIAGSVQVVQS) is a signal peptide. At 30 to 636 (QNQTGATTHP…PPSKGKNRTG (607 aa)) the chain is on the extracellular side. 3 N-linked (GlcNAc...) asparagine glycosylation sites follow: Asn31, Asn61, and Asn95. 10 LRR repeats span residues 101 to 122 (ITNIKVYAIDVVGPIPPELWTL), 123 to 146 (TYLTNLNLGQNVLTGSLPPAIGNL), 148 to 170 (RMQWMTFGINALSGPVPKEIGLL), 171 to 194 (TDLRLLGISSNNFSGSIPDEIGRC), 196 to 217 (KLQQMYIDSSGLSGRIPLSFAN), 242 to 265 (WTKLTTLRIIGTGLSGPIPSSFSN), 290 to 314 (MKSLSVLVLRNNNLTGTIPSTIGEH), 315 to 338 (SSLRQVDLSFNKLHGPIPASLFNL), 340 to 360 (QLTHLFLGNNTLNGSFPTQKT), and 361 to 385 (QSLRNVDVSYNDLSGSLPSWVSLPS). An N-linked (GlcNAc...) asparagine glycan is attached at Asn145. An N-linked (GlcNAc...) asparagine glycan is attached at Asn182. N-linked (GlcNAc...) asparagine glycosylation is found at Asn265, Asn302, Asn337, Asn348, and Asn352. Residues Asn394, Asn580, and Asn633 are each glycosylated (N-linked (GlcNAc...) asparagine). A helical transmembrane segment spans residues 637-657 (TIVGVIVGVGLLSILAGVVMF). At 658–1032 (TIRKRRKRYT…MLGSKINEGR (375 aa)) the chain is on the cytoplasmic side. Phosphothreonine is present on Thr683. A Protein kinase domain is found at 694 to 968 (FDPSNKLGEG…VAMLSGDVEI (275 aa)). ATP is bound by residues 700 to 708 (LGEGGFGPV) and Lys722. A Phosphotyrosine modification is found at Tyr767. Residue Asp818 is the Proton acceptor of the active site. A phosphoserine mark is found at Ser822 and Ser851. 2 positions are modified to phosphothreonine: Thr852 and Thr857. Tyr865 carries the phosphotyrosine modification. The segment at 1008-1032 (APGSEISPRDSDFKPMLGSKINEGR) is disordered.

It belongs to the protein kinase superfamily. Ser/Thr protein kinase family.

Its subcellular location is the cell membrane. The catalysed reaction is L-seryl-[protein] + ATP = O-phospho-L-seryl-[protein] + ADP + H(+). The enzyme catalyses L-threonyl-[protein] + ATP = O-phospho-L-threonyl-[protein] + ADP + H(+). In Arabidopsis thaliana (Mouse-ear cress), this protein is Probable LRR receptor-like serine/threonine-protein kinase At1g56130.